Consider the following 335-residue polypeptide: ETS translocation variant 2 (335 aa).

Disordered regions lie at residues 94 to 138 (DPWS…SWSH) and 201 to 220 (GHQSPAFTTPSKSNKQSDRA). The segment covering 205-220 (PAFTTPSKSNKQSDRA) has biased composition (polar residues). The segment at residues 234–314 (IQLWQFLLEL…GGRKYTYRFG (81 aa)) is a DNA-binding region (ETS).

Belongs to the ETS family. As to expression, testis.

Its subcellular location is the nucleus. Functionally, binds to DNA sequences containing the consensus pentanucleotide 5'-CGGA[AT]-3'. The polypeptide is ETS translocation variant 2 (Etv2) (Mus musculus (Mouse)).